We begin with the raw amino-acid sequence, 227 residues long: 7-cyano-7-deazaguanine synthase (227 aa).

10-20 (LSGGLDSCVAT) provides a ligand contact to ATP. Residues Cys-193, Cys-201, Cys-204, and Cys-207 each contribute to the Zn(2+) site.

The protein belongs to the QueC family. Zn(2+) serves as cofactor.

The enzyme catalyses 7-carboxy-7-deazaguanine + NH4(+) + ATP = 7-cyano-7-deazaguanine + ADP + phosphate + H2O + H(+). It participates in purine metabolism; 7-cyano-7-deazaguanine biosynthesis. Functionally, catalyzes the ATP-dependent conversion of 7-carboxy-7-deazaguanine (CDG) to 7-cyano-7-deazaguanine (preQ(0)). This chain is 7-cyano-7-deazaguanine synthase, found in Methanobrevibacter smithii (strain ATCC 35061 / DSM 861 / OCM 144 / PS).